We begin with the raw amino-acid sequence, 187 residues long: HTH-type transcriptional repressor Rv1474c (187 aa).

One can recognise an HTH tetR-type domain in the interval 10 to 70; it reads AARRRQILDG…ALAREDTERM (61 aa). Positions 33-52 form a DNA-binding region, H-T-H motif; sequence TVRRLEQAIGMSRGAIFHHF.

In terms of assembly, homodimer.

Its activity is regulated as follows. Binding to DNA is abolished in the presence of high concentration of iron. Specifically binds to tetracycline, which leads to a conformational change in the structure of the protein and inhibits the DNA binding activity. Functionally, represses the expression of the aconitase gene acn and its own expression, in an iron-responsive manner. Binds to the inverted repeat element present in the upstream region of acn (Rv1475c)-Rv1474c operon. Preferentially binds to major groove of the DNA. This chain is HTH-type transcriptional repressor Rv1474c, found in Mycobacterium tuberculosis (strain ATCC 25618 / H37Rv).